The chain runs to 115 residues: Putative type I restriction enzyme MpnIIP endonuclease subunit middle part (115 aa).

Its function is as follows. The middle section of a putative type I restriction enzyme that if reconstituted might recognize 5'-GAN(7)TAY-3' and cleave a random distance away. Subunit R is required for both nuclease and ATPase activities, but not for modification. This Mycoplasma pneumoniae (strain ATCC 29342 / M129 / Subtype 1) (Mycoplasmoides pneumoniae) protein is Putative type I restriction enzyme MpnIIP endonuclease subunit middle part.